The following is a 704-amino-acid chain: Elongation factor G (704 aa).

The tr-type G domain maps to 8-290; it reads ARYRNIGISA…AVVDYLPSPV (283 aa). Residues 17 to 24, 88 to 92, and 142 to 145 contribute to the GTP site; these read AHIDAGKT, DTPGH, and NKMD.

The protein belongs to the TRAFAC class translation factor GTPase superfamily. Classic translation factor GTPase family. EF-G/EF-2 subfamily.

The protein localises to the cytoplasm. Its function is as follows. Catalyzes the GTP-dependent ribosomal translocation step during translation elongation. During this step, the ribosome changes from the pre-translocational (PRE) to the post-translocational (POST) state as the newly formed A-site-bound peptidyl-tRNA and P-site-bound deacylated tRNA move to the P and E sites, respectively. Catalyzes the coordinated movement of the two tRNA molecules, the mRNA and conformational changes in the ribosome. The polypeptide is Elongation factor G (Pectobacterium carotovorum subsp. carotovorum (strain PC1)).